We begin with the raw amino-acid sequence, 124 residues long: uncharacterized protein (124 aa).

Interacts with dil1.

This is an uncharacterized protein from Schizosaccharomyces pombe (strain 972 / ATCC 24843) (Fission yeast).